A 90-amino-acid chain; its full sequence is WAP four-disulfide core domain protein 12 (90 aa).

An N-terminal signal peptide occupies residues 1-23 (MGSSSFLVLMVSLALVTLVAVEG). The region spanning 27-74 (GIEKAGVCPADNVRCFKSDPPQCHTDQDCLGERKCCYLHCGFKCVIPV) is the WAP domain. Disulfide bonds link C34/C62, C41/C66, C49/C61, and C55/C70.

The protein localises to the secreted. In terms of biological role, antibacterial protein. Putative acid-stable proteinase inhibitor. This is WAP four-disulfide core domain protein 12 (WFDC12) from Gorilla gorilla gorilla (Western lowland gorilla).